We begin with the raw amino-acid sequence, 442 residues long: Septin-8 (442 aa).

Ala-2 is modified (N-acetylalanine). A Phosphoserine modification is found at Ser-10. One can recognise a Septin-type G domain in the interval 41–307 (QGFSFNILCV…ELYRRCKLEE (267 aa)). Residues 51 to 58 (GETGIGKS) are G1 motif. GTP is bound by residues 51-58 (GETGIGKS), Gly-106, 187-195 (KADTISKSE), Gly-241, and Arg-256. The segment at 103–106 (DAVG) is G3 motif. The interval 186–189 (AKAD) is G4 motif. A coiled-coil region spans residues 322–410 (LQETYEAKRK…RKAAVEALQS (89 aa)). Positions 377–391 (HQEEKRKVEEKRREL) are enriched in basic and acidic residues. Residues 377-442 (HQEEKRKVEE…WSSIYSVTIP (66 aa)) form a disordered region. 2 stretches are compositionally biased toward polar residues: residues 408 to 420 (LQSQ…SQQP) and 432 to 442 (GWSSIYSVTIP).

It belongs to the TRAFAC class TrmE-Era-EngA-EngB-Septin-like GTPase superfamily. Septin GTPase family. As to quaternary structure, septins polymerize into heterooligomeric protein complexes that form filaments, and can associate with cellular membranes, actin filaments and microtubules. GTPase activity is required for filament formation. Interacts with CDK14, SEPTIN4, SEPTIN5 and SEPTIN7. Interacts with VAMP2; the interaction inhibits interaction of VAMP2 with SYP. Interacts with STX1A.

It localises to the cytoplasm. The protein resides in the cytoskeleton. The protein localises to the synapse. Its subcellular location is the cell projection. It is found in the axon. It localises to the cytoplasmic vesicle. The protein resides in the secretory vesicle. The protein localises to the synaptic vesicle membrane. Its subcellular location is the presynapse. In terms of biological role, filament-forming cytoskeletal GTPase. May play a role in platelet secretion. Seems to participate in the process of SNARE complex formation in synaptic vesicles. This Callithrix jacchus (White-tufted-ear marmoset) protein is Septin-8.